Reading from the N-terminus, the 780-residue chain is Tyrosine-protein phosphatase non-receptor type 12 (780 aa).

Position 1 is an N-acetylmethionine (methionine 1). A Phosphoserine modification is found at serine 19. The Tyrosine-protein phosphatase domain maps to 28 to 293; that stretch reads FARDFMRLRR…ELVHRAIAQL (266 aa). Residues arginine 36, 63-67, aspartate 199, 231-237, and glutamine 278 each bind substrate; these read RYKDI and CSAGCGR. Cysteine 231 (phosphocysteine intermediate) is an active-site residue. Residues serine 332, serine 435, serine 449, and serine 468 each carry the phosphoserine modification. Residues 345-438 are interaction with TGFB1I1; that stretch reads VEGDAKEEIL…KLERNLSFEI (94 aa). A compositionally biased stretch (polar residues) spans 502–519; it reads QSNKVSVTPPEESQNSDT. Disordered regions lie at residues 502–639, 657–725, and 744–780; these read QSNK…STES, GTTH…EKCD, and SDKREQISENPTEATDIGFGNRCGKPKGPRDPPSEWT. Threonine 509 and threonine 519 each carry phosphothreonine. The segment covering 521–533 has biased composition (basic and acidic residues); that stretch reads PRPDRLPLDEKGH. Polar residues-rich tracts occupy residues 552-577 and 587-601; these read EGNSSDINYQTRKTVSLTPSPTTQVE and TSPLFRTPLSFTNPL. At serine 567 the chain carries Phosphoserine. Residue threonine 569 is modified to Phosphothreonine. 2 positions are modified to phosphoserine: serine 571 and serine 596. Residue threonine 598 is modified to Phosphothreonine. Residues 602 to 613 show a composition bias toward basic and acidic residues; that stretch reads HSDDSDSDERNS. A phosphoserine mark is found at serine 603, serine 606, serine 608, and serine 613. Low complexity predominate over residues 622-639; it reads TNISTASATVSAATSTES. Serine 673 and serine 689 each carry phosphoserine. The span at 690–703 shows a compositional bias: polar residues; the sequence is EHNTPVRSEWSELQ. Position 693 is a phosphothreonine (threonine 693). 2 stretches are compositionally biased toward basic and acidic residues: residues 704–725 and 771–780; these read SQERSEQKKSEGLITSENEKCD and GPRDPPSEWT.

It belongs to the protein-tyrosine phosphatase family. Non-receptor class 4 subfamily. Interacts with TGFB1I1. Interacts with PSTPIP1. Interacts with PTK2B/PYK2. Interacts with LPXN. Interacts with SORBS2; this interaction greatly enhances WASF1 dephosphorylation and might mediate partial translocation to focal adhesion sites. In terms of processing, phosphorylated by STK24/MST3 and this results in inhibition of its activity.

It is found in the cytoplasm. The protein resides in the cell junction. It localises to the focal adhesion. The protein localises to the cell projection. Its subcellular location is the podosome. It catalyses the reaction O-phospho-L-tyrosyl-[protein] + H2O = L-tyrosyl-[protein] + phosphate. In terms of biological role, dephosphorylates a range of proteins, and thereby regulates cellular signaling cascades. Dephosphorylates cellular tyrosine kinases, such as ERBB2 and PTK2B/PYK2, and thereby regulates signaling via ERBB2 and PTK2B/PYK2. Selectively dephosphorylates ERBB2 phosphorylated at 'Tyr-1112', 'Tyr-1196', and/or 'Tyr-1248'. This is Tyrosine-protein phosphatase non-receptor type 12 (PTPN12) from Homo sapiens (Human).